Here is a 637-residue protein sequence, read N- to C-terminus: Chaperone protein DnaK (637 aa).

Residue Thr-196 is modified to Phosphothreonine; by autocatalysis. The tract at residues 598–637 is disordered; that stretch reads AEAPGADAPEGQAPQDGGSKKGGEGAVENAEYEVIDGDGK. A compositionally biased stretch (acidic residues) spans 627–637; that stretch reads AEYEVIDGDGK.

This sequence belongs to the heat shock protein 70 family.

Its function is as follows. Acts as a chaperone. The protein is Chaperone protein DnaK of Chlorobium luteolum (strain DSM 273 / BCRC 81028 / 2530) (Pelodictyon luteolum).